A 584-amino-acid chain; its full sequence is Cation channel sperm-associated protein 2 (584 aa).

Over 1–106 (MAHERGHLQL…LWAGWVLDSS (106 aa)) the chain is Cytoplasmic. Residues 107-129 (IFSNFIISLIFLNTFVLMVEIEL) traverse the membrane as a helical segment. Over 130–138 (MNSTNTSLW) the chain is Extracellular. The chain crosses the membrane as a helical span at residues 139–164 (PLKLALEVTDWFILLSFIVEILLMWL). Topologically, residues 165–173 (ASFFLFWKN) are cytoplasmic. A helical transmembrane segment spans residues 174–198 (AWSVFDFVVTMLSLLPEFVVLIGVS). The Extracellular portion of the chain corresponds to 199–201 (ADS). The chain crosses the membrane as a helical span at residues 202-220 (VWLQLLRVSRVLRSLKLFA). Residues 221–237 (RFPQIKVILLALVRALK) lie on the Cytoplasmic side of the membrane. The chain crosses the membrane as a helical span at residues 238–260 (SMTFLLMLLLIFFYVFAVAGVYF). Residues 261-279 (FKEYSRSTIENLEYNMFFS) lie on the Extracellular side of the membrane. Residues 280–292 (DLLNSLVTVFILF) constitute an intramembrane region (helical; Pore-forming). Topologically, residues 293–312 (TLDHWYAVLQDVWKVPEASR) are extracellular. The helical transmembrane segment at 313–339 (VFSSIYVILWLLLGSIIFRNIIVAMMV) threads the bilayer. At 340–584 (TNFQNIRNEL…VQALMNFEDK (245 aa)) the chain is on the cytoplasmic side. The segment covering 376–386 (SESLRGTSQGK) has biased composition (polar residues). Disordered stretches follow at residues 376–460 (SESL…KGYT) and 480–510 (AGKA…HDEA). 2 stretches are compositionally biased toward acidic residues: residues 390–418 (DITE…EEKS) and 426–443 (EKND…EEKS). 2 stretches are compositionally biased toward basic and acidic residues: residues 444–460 (DVEK…KGYT) and 483–496 (AENE…KEKA).

Belongs to the cation channel sperm-associated (TC 1.A.1.19) family. In terms of assembly, component of the CatSper complex or CatSpermasome composed of the core pore-forming members CATSPER1, CATSPER2, CATSPER3 and CATSPER4 as well as auxiliary members CATSPERB, CATSPERG, CATSPERD, CATSPERE, CATSPERZ, C2CD6/CATSPERT, SLCO6C1, TMEM249, TMEM262 and EFCAB9. HSPA1 may be an additional auxiliary complex member. The core complex members CATSPER1, CATSPER2, CATSPER3 and CATSPER4 form a heterotetrameric channel. The auxiliary CATSPERB, CATSPERG, CATSPERD and CATSPERE subunits form a pavilion-like structure over the pore which stabilizes the complex through interactions with CATSPER4, CATSPER3, CATSPER1 and CATSPER2 respectively. SLCO6C1 interacts with CATSPERE and TMEM262/CATSPERH interacts with CATSPERB, further stabilizing the complex. C2CD6/CATSPERT interacts at least with CATSPERD and is required for targeting the CatSper complex in the flagellar membrane. Interacts with Ca(v)3.3/CACNA1I, leading to suppression of T-type calcium channel activity.

Its subcellular location is the cell projection. The protein localises to the cilium. The protein resides in the flagellum membrane. The catalysed reaction is Ca(2+)(in) = Ca(2+)(out). Its activity is regulated as follows. Activated by intracellular alkalinization. Its function is as follows. Pore-forming subunit of the CatSper complex, a sperm-specific voltage-gated calcium channel that plays a central role in sperm cell hyperactivation. Controls calcium entry to mediate the hyperactivated motility, a step needed for sperm motility which is essential late in the preparation of sperm for fertilization. This is Cation channel sperm-associated protein 2 (Catsper2) from Rattus norvegicus (Rat).